The sequence spans 63 residues: Large ribosomal subunit protein uL30 (63 aa).

Belongs to the universal ribosomal protein uL30 family. Part of the 50S ribosomal subunit.

This chain is Large ribosomal subunit protein uL30, found in Xylella fastidiosa (strain M23).